The chain runs to 1306 residues: DNA-directed RNA polymerase subunit beta' (1306 aa).

Zn(2+) contacts are provided by cysteine 214, cysteine 285, cysteine 292, and cysteine 295. Disordered regions lie at residues 1234–1263 (LDNG…PNRL) and 1281–1306 (IARA…DDDK). Over residues 1247–1259 (QGERDNNNSDKKP) the composition is skewed to basic and acidic residues.

Belongs to the RNA polymerase beta' chain family. RpoC2 subfamily. As to quaternary structure, in cyanobacteria the RNAP catalytic core is composed of 2 alpha, 1 beta, 1 beta', 1 gamma and 1 omega subunit. When a sigma factor is associated with the core the holoenzyme is formed, which can initiate transcription. The cofactor is Zn(2+).

The catalysed reaction is RNA(n) + a ribonucleoside 5'-triphosphate = RNA(n+1) + diphosphate. DNA-dependent RNA polymerase catalyzes the transcription of DNA into RNA using the four ribonucleoside triphosphates as substrates. This Crocosphaera subtropica (strain ATCC 51142 / BH68) (Cyanothece sp. (strain ATCC 51142)) protein is DNA-directed RNA polymerase subunit beta'.